A 161-amino-acid polypeptide reads, in one-letter code: Transcriptional repressor NrdR (161 aa).

The span at 1–11 shows a compositional bias: polar residues; that stretch reads MRCPSCNSLDT. Residues 1 to 20 form a disordered region; it reads MRCPSCNSLDTQVKDSRPTE. A zinc finger lies at 3-34; the sequence is CPSCNSLDTQVKDSRPTEDSSVIRRRRVCVTC. The ATP-cone domain occupies 49–139; it reads LTVIKRNGRR…VYRNFREAKD (91 aa).

The protein belongs to the NrdR family. Zn(2+) serves as cofactor.

In terms of biological role, negatively regulates transcription of bacterial ribonucleotide reductase nrd genes and operons by binding to NrdR-boxes. This is Transcriptional repressor NrdR from Bradyrhizobium sp. (strain BTAi1 / ATCC BAA-1182).